Here is a 204-residue protein sequence, read N- to C-terminus: Thymidine kinase (204 aa).

ATP is bound by residues Gly23 to Thr30 and Asp95 to Gln98. Glu96 acts as the Proton acceptor in catalysis. Positions 152, 155, 184, and 187 each coordinate Zn(2+).

The protein belongs to the thymidine kinase family. Homotetramer.

It is found in the cytoplasm. It carries out the reaction thymidine + ATP = dTMP + ADP + H(+). The polypeptide is Thymidine kinase (Porphyromonas gingivalis (strain ATCC 33277 / DSM 20709 / CIP 103683 / JCM 12257 / NCTC 11834 / 2561)).